Here is a 208-residue protein sequence, read N- to C-terminus: Rac-like GTP-binding protein ARAC8 (208 aa).

15–22 (GDGAVGKT) lines the GTP pocket. An Effector region motif is present at residues 37-45 (YIPTVFDNF). GTP-binding positions include 62–66 (DTAGQ) and 120–123 (TKMD). 2 S-palmitoyl cysteine lipidation sites follow: Cys-199 and Cys-205.

It belongs to the small GTPase superfamily. Rho family. In terms of assembly, interacts with ICR1. Binds to SPK1. Post-translationally, although this sequence has a C-terminal -CXXX, it is palmitoylated at Cys-205, rather than prenylated.

It is found in the membrane. Acts as a negative regulator of abscisic acid (ABA) responses. In Arabidopsis thaliana (Mouse-ear cress), this protein is Rac-like GTP-binding protein ARAC8 (ARAC8).